The chain runs to 67 residues: Large ribosomal subunit protein bL35 (67 aa).

Residues 1–16 (MPKMKTKKSAAKRFRV) are compositionally biased toward basic residues. A disordered region spans residues 1 to 22 (MPKMKTKKSAAKRFRVRPGGTV).

The protein belongs to the bacterial ribosomal protein bL35 family.

In Methylibium petroleiphilum (strain ATCC BAA-1232 / LMG 22953 / PM1), this protein is Large ribosomal subunit protein bL35.